We begin with the raw amino-acid sequence, 84 residues long: UPF0457 protein BCE33L2961 (84 aa).

It belongs to the UPF0457 family.

The polypeptide is UPF0457 protein BCE33L2961 (Bacillus cereus (strain ZK / E33L)).